The following is an 81-amino-acid chain: LYR motif-containing protein At3g19508 (81 aa).

Belongs to the complex I LYR family. LYRM9 subfamily.

This chain is LYR motif-containing protein At3g19508, found in Arabidopsis thaliana (Mouse-ear cress).